The primary structure comprises 407 residues: tRNA pseudouridine synthase Pus10 (407 aa).

D232 (nucleophile) is an active-site residue. Y300 and Y369 together coordinate substrate.

Belongs to the pseudouridine synthase Pus10 family.

The catalysed reaction is uridine(54) in tRNA = pseudouridine(54) in tRNA. The enzyme catalyses uridine(55) in tRNA = pseudouridine(55) in tRNA. Responsible for synthesis of pseudouridine from uracil-54 and uracil-55 in the psi GC loop of transfer RNAs. The sequence is that of tRNA pseudouridine synthase Pus10 from Methanosphaera stadtmanae (strain ATCC 43021 / DSM 3091 / JCM 11832 / MCB-3).